The following is a 266-amino-acid chain: rRNA adenine N-6-methyltransferase (266 aa).

S-adenosyl-L-methionine contacts are provided by histidine 14, threonine 16, glycine 41, glutamate 62, aspartate 87, and asparagine 103.

Belongs to the class I-like SAM-binding methyltransferase superfamily. rRNA adenine N(6)-methyltransferase family.

In terms of biological role, involved in erythromycin resistance. In Bacteroides fragilis, this protein is rRNA adenine N-6-methyltransferase (ermF).